Consider the following 95-residue polypeptide: Small ribosomal subunit protein bS6 (95 aa).

Belongs to the bacterial ribosomal protein bS6 family.

Functionally, binds together with bS18 to 16S ribosomal RNA. This chain is Small ribosomal subunit protein bS6, found in Corynebacterium jeikeium (strain K411).